The chain runs to 145 residues: 3-dehydroquinate dehydratase (145 aa).

Residue tyrosine 23 is the Proton acceptor of the active site. Residues asparagine 75, histidine 81, and aspartate 88 each coordinate substrate. Histidine 101 functions as the Proton donor in the catalytic mechanism. Substrate is bound by residues 102–103 (LS) and arginine 112.

The protein belongs to the type-II 3-dehydroquinase family. In terms of assembly, homododecamer.

It carries out the reaction 3-dehydroquinate = 3-dehydroshikimate + H2O. It functions in the pathway metabolic intermediate biosynthesis; chorismate biosynthesis; chorismate from D-erythrose 4-phosphate and phosphoenolpyruvate: step 3/7. Functionally, catalyzes a trans-dehydration via an enolate intermediate. The sequence is that of 3-dehydroquinate dehydratase from Legionella pneumophila (strain Paris).